The primary structure comprises 474 residues: Sestrin homolog (474 aa).

Belongs to the sestrin family.

Its subcellular location is the nucleus. The protein resides in the cytoplasm. Its function is as follows. May function as a negative feedback regulator of TOR function. The polypeptide is Sestrin homolog (Caenorhabditis elegans).